The sequence spans 404 residues: Cysteine desulfurase IscS (404 aa).

Pyridoxal 5'-phosphate contacts are provided by residues 75 to 76 (AT), N155, Q183, and 203 to 205 (SGH). K206 carries the N6-(pyridoxal phosphate)lysine modification. A pyridoxal 5'-phosphate-binding site is contributed by T243. Catalysis depends on C328, which acts as the Cysteine persulfide intermediate. C328 contributes to the [2Fe-2S] cluster binding site.

The protein belongs to the class-V pyridoxal-phosphate-dependent aminotransferase family. NifS/IscS subfamily. As to quaternary structure, homodimer. Forms a heterotetramer with IscU, interacts with other sulfur acceptors. It depends on pyridoxal 5'-phosphate as a cofactor.

The protein resides in the cytoplasm. It carries out the reaction (sulfur carrier)-H + L-cysteine = (sulfur carrier)-SH + L-alanine. It participates in cofactor biosynthesis; iron-sulfur cluster biosynthesis. Master enzyme that delivers sulfur to a number of partners involved in Fe-S cluster assembly, tRNA modification or cofactor biosynthesis. Catalyzes the removal of elemental sulfur atoms from cysteine to produce alanine. Functions as a sulfur delivery protein for Fe-S cluster synthesis onto IscU, an Fe-S scaffold assembly protein, as well as other S acceptor proteins. The chain is Cysteine desulfurase IscS from Shewanella oneidensis (strain ATCC 700550 / JCM 31522 / CIP 106686 / LMG 19005 / NCIMB 14063 / MR-1).